The chain runs to 192 residues: Pyruvate synthase subunit PorC (192 aa).

Heterotetramer of one alpha, one beta, one delta and one gamma chain.

The enzyme catalyses 2 oxidized [2Fe-2S]-[ferredoxin] + pyruvate + CoA = 2 reduced [2Fe-2S]-[ferredoxin] + acetyl-CoA + CO2 + H(+). The chain is Pyruvate synthase subunit PorC (porC) from Thermotoga maritima (strain ATCC 43589 / DSM 3109 / JCM 10099 / NBRC 100826 / MSB8).